The chain runs to 423 residues: Anthranilate 1,2-dioxygenase large subunit (423 aa).

In terms of domain architecture, Rieske spans 53 to 168; sequence WNFVALEAEI…VDSYRGLVFA (116 aa). [2Fe-2S] cluster is bound by residues C95, H97, C115, and H118. Residues H223, H228, and D370 each coordinate Fe cation.

Belongs to the bacterial ring-hydroxylating dioxygenase alpha subunit family. Part of a multicomponent enzyme system composed of a reductase (AndAa), a ferredoxin (AndAb) and a two-subunit oxygenase component (AndAc and AndAd). The cofactor is Fe cation. [2Fe-2S] cluster serves as cofactor.

It catalyses the reaction anthranilate + NADH + O2 + 3 H(+) = catechol + NH4(+) + CO2 + NAD(+). The catalysed reaction is anthranilate + NADPH + O2 + 3 H(+) = catechol + NH4(+) + CO2 + NADP(+). The protein operates within aromatic compound metabolism; anthranilate degradation via hydroxylation; catechol from anthranilate: step 1/1. Functionally, oxygenase component of anthranilate dioxygenase multicomponent enzyme system which catalyzes the incorporation of both atoms of molecular oxygen into anthranilate to form catechol. Can also act on benzoate and salicylate but not on 2-chlorobenzoate or o-toluate. This chain is Anthranilate 1,2-dioxygenase large subunit, found in Burkholderia cepacia (Pseudomonas cepacia).